A 404-amino-acid polypeptide reads, in one-letter code: Schlafen-like protein 1 (404 aa).

Disordered stretches follow at residues 1–31 (MTPM…LPTE) and 139–170 (GPLS…AWPT). A compositionally biased stretch (polar residues) spans 7–16 (SVQTQVSEPF). A compositionally biased stretch (low complexity) spans 152–165 (GLSPGPNPGSGVPL). An ATP-binding site is contributed by 258–265 (GVEDSGLV). Residues 365-395 (RWLVELGKLEERVKVLTMEKEQLQQQLQQHG) adopt a coiled-coil conformation.

This sequence belongs to the Schlafen family. Subgroup I subfamily.

The chain is Schlafen-like protein 1 (SLFNL1) from Macaca fascicularis (Crab-eating macaque).